Here is an 870-residue protein sequence, read N- to C-terminus: DNA mismatch repair protein MutS (870 aa).

608 to 615 (GPNMAGKS) contacts ATP.

It belongs to the DNA mismatch repair MutS family.

This protein is involved in the repair of mismatches in DNA. It is possible that it carries out the mismatch recognition step. This protein has a weak ATPase activity. The chain is DNA mismatch repair protein MutS from Persephonella marina (strain DSM 14350 / EX-H1).